The following is a 393-amino-acid chain: 4-hydroxyphenylpyruvate dioxygenase (393 aa).

Thr2 is modified (N-acetylthreonine). VOC domains follow at residues 18–152 and 180–338; these read HFHS…KMTF and IIDH…IFTK. Residue His183 participates in Fe cation binding. Phosphoserine occurs at positions 211, 226, and 250. Positions 266 and 349 each coordinate Fe cation.

This sequence belongs to the 4HPPD family. Homodimer. Requires Fe cation as cofactor. Liver.

The protein localises to the cytoplasm. The protein resides in the endoplasmic reticulum membrane. Its subcellular location is the golgi apparatus membrane. It carries out the reaction 3-(4-hydroxyphenyl)pyruvate + O2 = homogentisate + CO2. The protein operates within amino-acid degradation; L-phenylalanine degradation; acetoacetate and fumarate from L-phenylalanine: step 3/6. In terms of biological role, catalyzes the conversion of 4-hydroxyphenylpyruvic acid to homogentisic acid, one of the steps in tyrosine catabolism. In Sus scrofa (Pig), this protein is 4-hydroxyphenylpyruvate dioxygenase (HPD).